A 521-amino-acid chain; its full sequence is Beta-glucosidase 6 (521 aa).

Positions 1–38 (MGRIKSSSGRCSTARLEAVAVLVVVFGVASSSLRGCIA) are cleaved as a signal peptide. Residues Gln-64, His-165, and 210-211 (NE) contribute to the a beta-D-glucoside site. Glu-211 (proton donor) is an active-site residue. The cysteines at positions 230 and 238 are disulfide-linked. N-linked (GlcNAc...) asparagine glycosylation occurs at Asn-291. Tyr-354 is an a beta-D-glucoside binding site. N-linked (GlcNAc...) asparagine glycans are attached at residues Asn-362 and Asn-372. Residues Glu-427, Trp-477, 484-485 (EW), and Phe-493 each bind a beta-D-glucoside. Residue Glu-427 is the Nucleophile of the active site.

It belongs to the glycosyl hydrolase 1 family. In terms of assembly, homodimer.

It is found in the secreted. It carries out the reaction Hydrolysis of terminal, non-reducing beta-D-glucosyl residues with release of beta-D-glucose.. Hydrolyzes glycosides, oligosaccharides and hydrophobic glycosides. Possesses gibberellin ester beta-D-glucosidase activity. Can hydrolyze gibberellin A4 beta-D-glucosyl ester in vitro. This is Beta-glucosidase 6 from Oryza sativa subsp. japonica (Rice).